Reading from the N-terminus, the 36-residue chain is Delta-amaurobitoxin-Pl1c (36 aa).

4 disulfide bridges follow: Cys3/Cys19, Cys10/Cys24, Cys18/Cys34, and Cys26/Cys32.

In terms of tissue distribution, expressed by the venom gland.

The protein localises to the secreted. Binds at site 4 of sodium channels (Nav) and inhibits the fast inactivation of cockroach channels. This toxin is active only on insects. Has a potent activity against S.litura larvae. This chain is Delta-amaurobitoxin-Pl1c, found in Pireneitega luctuosa (Tangled nest spider).